A 404-amino-acid polypeptide reads, in one-letter code: Synaptic vesicle membrane protein VAT-1 homolog (404 aa).

Residues 1 to 55 (MSAEREATEAATVAAAAEARAETGAGEGAPSQPPTVEVASDPQPPPAPEASASAS) are disordered. Ser-2 carries the post-translational modification N-acetylserine. Ser-2 carries the phosphoserine modification. The segment covering 9 to 24 (EAATVAAAAEARAETG) has biased composition (low complexity). Ser-31 and Ser-40 each carry phosphoserine.

Belongs to the zinc-containing alcohol dehydrogenase family. Quinone oxidoreductase subfamily. Interacts with MFN1 and MFN2. As to expression, ubiquitously expressed.

It localises to the cytoplasm. The protein localises to the mitochondrion outer membrane. Its function is as follows. Plays a part in calcium-regulated keratinocyte activation in epidermal repair mechanisms. Has no effect on cell proliferation. Possesses ATPase activity. May negatively regulate mitochondrial fusion. The sequence is that of Synaptic vesicle membrane protein VAT-1 homolog (Vat1) from Rattus norvegicus (Rat).